Here is an 83-residue protein sequence, read N- to C-terminus: Cell division topological specificity factor (83 aa).

This sequence belongs to the MinE family.

Its function is as follows. Prevents the cell division inhibition by proteins MinC and MinD at internal division sites while permitting inhibition at polar sites. This ensures cell division at the proper site by restricting the formation of a division septum at the midpoint of the long axis of the cell. The sequence is that of Cell division topological specificity factor from Pseudoalteromonas atlantica (strain T6c / ATCC BAA-1087).